An 828-amino-acid polypeptide reads, in one-letter code: Fibroblast growth factor receptor 4 (828 aa).

The signal sequence occupies residues 1-31; the sequence is MSGSIRRSYTAMQNFPRFLLGVLFVATLSSC. At 32 to 392 the chain is on the extracellular side; the sequence is RPRLSEDEAN…AEPAESRYMD (361 aa). One can recognise an Ig-like C2-type 1 domain in the interval 33 to 127; sequence PRLSEDEANW…GKILRRFSIS (95 aa). A disulfide bond links cysteine 67 and cysteine 112. N-linked (GlcNAc...) asparagine glycosylation is present at asparagine 70. Residues 132–156 form a disordered region; sequence LASGDEEEEEEDDDDEDGRREDTTA. Over residues 135–147 the composition is skewed to acidic residues; that stretch reads GDEEEEEEDDDDE. 2 Ig-like C2-type domains span residues 169–259 and 272–372; these read PYWT…LTYT and PILQ…AWLT. The cysteines at positions 194 and 247 are disulfide-linked. Asparagine 244, asparagine 281, asparagine 313, and asparagine 345 each carry an N-linked (GlcNAc...) asparagine glycan. A disulfide bond links cysteine 294 and cysteine 356. A helical membrane pass occupies residues 393–413; it reads IIIYTSGFLAVAMAIMIVILC. The Cytoplasmic portion of the chain corresponds to 414-828; it reads RMQTPHSKQT…YHNIHSQLGT (415 aa). Residues 490-777 enclose the Protein kinase domain; it reads LVLGKPLGEG…ILTAVSEEYL (288 aa). ATP contacts are provided by residues 496–504 and lysine 526; that span reads LGEGCFGQV. The Proton acceptor role is filled by aspartate 635. Tyrosine 665, tyrosine 666, and tyrosine 776 each carry phosphotyrosine; by autocatalysis.

This sequence belongs to the protein kinase superfamily. Tyr protein kinase family. Fibroblast growth factor receptor subfamily. Ubiquitinated. Subject to proteasomal degradation when not fully glycosylated. In terms of processing, autophosphorylated. Binding of FGF family members together with heparan sulfate proteoglycan or heparin promotes receptor dimerization and autophosphorylation on tyrosine residues. Autophosphorylation occurs in trans between the two FGFR molecules present in the dimer.

It is found in the cell membrane. Its subcellular location is the endosome. It localises to the endoplasmic reticulum. It catalyses the reaction L-tyrosyl-[protein] + ATP = O-phospho-L-tyrosyl-[protein] + ADP + H(+). Present in an inactive conformation in the absence of bound ligand. Ligand binding leads to dimerization and activation by autophosphorylation on tyrosine residues. Functionally, tyrosine-protein kinase that acts as a cell-surface receptor for fibroblast growth factors and plays a role in the regulation of cell proliferation, differentiation and migration, and in regulation of lipid metabolism, bile acid biosynthesis, glucose uptake, vitamin D metabolism and phosphate homeostasis. Required for normal down-regulation of the expression of CYP7A1, the rate-limiting enzyme in bile acid synthesis, in response to FGF19. Phosphorylates PLCG1 and FRS2. Ligand binding leads to the activation of several signaling cascades. Activation of PLCG1 leads to the production of the cellular signaling molecules diacylglycerol and inositol 1,4,5-trisphosphate. Phosphorylation of FRS2 triggers recruitment of GRB2, GAB1, PIK3R1 and SOS1, and mediates activation of RAS, MAPK1/ERK2, MAPK3/ERK1 and the MAP kinase signaling pathway, as well as of the AKT1 signaling pathway. The chain is Fibroblast growth factor receptor 4 (fgfr4) from Xenopus laevis (African clawed frog).